A 381-amino-acid polypeptide reads, in one-letter code: Creatine kinase B-type (381 aa).

Ser4 carries the post-translational modification Phosphoserine. Residues 11–98 form the Phosphagen kinase N-terminal domain; that stretch reads KLRFPAEDEF…FDPIIEDRHG (88 aa). Thr35 carries the phosphothreonine modification. Residue Lys45 forms a Glycyl lysine isopeptide (Lys-Gly) (interchain with G-Cter in ubiquitin) linkage. Creatine is bound at residue Val72. A compositionally biased stretch (basic and acidic residues) spans 96–110; the sequence is RHGGYKPSDEHKTDL. Positions 96 to 123 are disordered; it reads RHGGYKPSDEHKTDLNPDNLQGGDDLDP. Glycyl lysine isopeptide (Lys-Gly) (interchain with G-Cter in ubiquitin) cross-links involve residues Lys101 and Lys107. A Phosphotyrosine modification is found at Tyr125. Residues 125 to 367 form the Phosphagen kinase C-terminal domain; it reads YVLSSRVRTG…KLLIEMEQRL (243 aa). ATP is bound by residues 128 to 132, Arg130, Arg132, and His191; that span reads SSRVR. The internal MTS-like signal stretch occupies residues 130–138; that stretch reads RVRTGRSIR. Phosphoserine is present on Ser199. Glu232 lines the creatine pocket. An ATP-binding site is contributed by Arg236. Tyr269 is subject to 3'-nitrotyrosine. Ser285 serves as a coordination point for creatine. Arg292 lines the ATP pocket. At Ser309 the chain carries Phosphoserine. ATP is bound by residues Arg320, 320 to 325, and Asp335; that span reads RGTGGV. Position 322 is a phosphothreonine (Thr322). Lys381 is covalently cross-linked (Glycyl lysine isopeptide (Lys-Gly) (interchain with G-Cter in ubiquitin)).

It belongs to the ATP:guanido phosphotransferase family. As to quaternary structure, dimer of identical or non-identical chains, which can be either B (brain type) or M (muscle type). With MM being the major form in skeletal muscle and myocardium, MB existing in myocardium, and BB existing in many tissues, especially brain. Interacts with SLC12A6 (via C-terminus); the interaction may be required for SLC12A6 potassium-chloride cotransport activity. Post-translationally, ubiquitinated by the ECS(ASB9) complex, leading to its degradation by the proteasome.

The protein localises to the cytoplasm. The protein resides in the cytosol. It localises to the mitochondrion. Its subcellular location is the cell membrane. The enzyme catalyses creatine + ATP = N-phosphocreatine + ADP + H(+). In terms of biological role, reversibly catalyzes the transfer of phosphate between ATP and various phosphogens (e.g. creatine phosphate). Creatine kinase isoenzymes play a central role in energy transduction in tissues with large, fluctuating energy demands, such as skeletal muscle, heart, brain and spermatozoa. Acts as a key regulator of adaptive thermogenesis as part of the futile creatine cycle: localizes to the mitochondria of thermogenic fat cells and acts by mediating phosphorylation of creatine to initiate a futile cycle of creatine phosphorylation and dephosphorylation. During the futile creatine cycle, creatine and N-phosphocreatine are in a futile cycle, which dissipates the high energy charge of N-phosphocreatine as heat without performing any mechanical or chemical work. This is Creatine kinase B-type (CKB) from Oryctolagus cuniculus (Rabbit).